The following is a 508-amino-acid chain: Photosystem II CP47 reaction center protein (508 aa).

Helical transmembrane passes span 21 to 36 (SVHIMHTALVAGWAGS), 101 to 115 (IVFSGLCFLAAIWHW), 140 to 156 (GIHLFLSGVACFGFGAF), 203 to 218 (IAAGTLGILAGLFHLS), 237 to 252 (VLSSSIAAVFFAAFVV), and 457 to 472 (SFALLFFFGHIWHGAR).

The protein belongs to the PsbB/PsbC family. PsbB subfamily. In terms of assembly, PSII is composed of 1 copy each of membrane proteins PsbA, PsbB, PsbC, PsbD, PsbE, PsbF, PsbH, PsbI, PsbJ, PsbK, PsbL, PsbM, PsbT, PsbX, PsbY, PsbZ, Psb30/Ycf12, at least 3 peripheral proteins of the oxygen-evolving complex and a large number of cofactors. It forms dimeric complexes. Binds multiple chlorophylls. PSII binds additional chlorophylls, carotenoids and specific lipids. is required as a cofactor.

Its subcellular location is the plastid. It is found in the chloroplast thylakoid membrane. Its function is as follows. One of the components of the core complex of photosystem II (PSII). It binds chlorophyll and helps catalyze the primary light-induced photochemical processes of PSII. PSII is a light-driven water:plastoquinone oxidoreductase, using light energy to abstract electrons from H(2)O, generating O(2) and a proton gradient subsequently used for ATP formation. This chain is Photosystem II CP47 reaction center protein, found in Barbarea verna (Land cress).